Here is a 605-residue protein sequence, read N- to C-terminus: Hepatocyte nuclear factor 1-alpha-A (605 aa).

The segment at 1–31 is dimerization; sequence MASQLSYLQRELLQALLESGVTKEALKKALA. Positions 1-32 constitute an HNF-p1 domain; that stretch reads MASQLSYLQRELLQALLESGVTKEALKKALAD. Residues 57–81 form a disordered region; the sequence is QLPNGLGESHISEDESSDDGEDFTP. Positions 85–180 constitute a POU-specific atypical domain; that stretch reads KELERLSPEE…IARLFTFTEF (96 aa). Interaction with DNA regions lie at residues 128 to 130, 141 to 147, 153 to 156, 206 to 209, 266 to 268, and 273 to 276; these read QRE, HLSQHLN, KTQK, RFKW, RVY, and NRRK. The short motif at 200–208 is the Nuclear localization signal element; it reads KKMRRNRFK. A DNA-binding region (homeobox; HNF1-type) is located at residues 202–282; that stretch reads MRRNRFKWGP…NRRKEEAFRH (81 aa). Residues 321-335 are compositionally biased toward polar residues; that stretch reads DRSAVMANSQSTPSP. The tract at residues 321 to 343 is disordered; that stretch reads DRSAVMANSQSTPSPSALEPSHS. Residues 448–453 form a not present in other members of the HNF1 family region; sequence PSHQLH.

It belongs to the HNF1 homeobox family. Binds DNA as dimer. Forms a homodimer or heterodimer with HNF1-alpha-B. Potentially also form a heterodimer with HNF1-beta. As to expression, protein expressed in liver, stomach, small intestine, colon and kidney. Not expressed in spleen, lung, blood, heart muscle, skeletal muscle, testis and brain.

The protein resides in the nucleus. In terms of biological role, transcriptional activator that regulates the tissue specific expression of multiple genes, especially in pancreas and liver. Binds to the hepatocyte specific promoter element HP1. Binds to the inverted palindrome 5'-GTTAATNATTAAC-3'. The polypeptide is Hepatocyte nuclear factor 1-alpha-A (hnf1a-a) (Xenopus laevis (African clawed frog)).